We begin with the raw amino-acid sequence, 235 residues long: Ubiquinone biosynthesis O-methyltransferase (235 aa).

Residues R39, G59, D80, and M124 each coordinate S-adenosyl-L-methionine.

It belongs to the methyltransferase superfamily. UbiG/COQ3 family.

The enzyme catalyses a 3-demethylubiquinol + S-adenosyl-L-methionine = a ubiquinol + S-adenosyl-L-homocysteine + H(+). The catalysed reaction is a 3-(all-trans-polyprenyl)benzene-1,2-diol + S-adenosyl-L-methionine = a 2-methoxy-6-(all-trans-polyprenyl)phenol + S-adenosyl-L-homocysteine + H(+). Its pathway is cofactor biosynthesis; ubiquinone biosynthesis. Functionally, O-methyltransferase that catalyzes the 2 O-methylation steps in the ubiquinone biosynthetic pathway. The polypeptide is Ubiquinone biosynthesis O-methyltransferase (Photobacterium profundum (strain SS9)).